Here is a 101-residue protein sequence, read N- to C-terminus: MAKTSMVNRDIKRKKLAEKYAVKRAALKKIVSSQDATYEEKIEAATKLSKLPRDSSPSRHRSRCELSGRPRGVYSKFGLGRNKLREATMRGDVPGLRKASW.

Residues 48–69 are disordered; that stretch reads LSKLPRDSSPSRHRSRCELSGR. Over residues 51–68 the composition is skewed to basic and acidic residues; the sequence is LPRDSSPSRHRSRCELSG.

It belongs to the universal ribosomal protein uS14 family. As to quaternary structure, part of the 30S ribosomal subunit. Contacts proteins S3 and S10.

Its function is as follows. Binds 16S rRNA, required for the assembly of 30S particles and may also be responsible for determining the conformation of the 16S rRNA at the A site. This is Small ribosomal subunit protein uS14 from Stenotrophomonas maltophilia (strain R551-3).